The primary structure comprises 251 residues: Hydroxyacylglutathione hydrolase (251 aa).

Zn(2+) contacts are provided by histidine 53, histidine 55, aspartate 57, histidine 58, histidine 110, aspartate 127, and histidine 165.

This sequence belongs to the metallo-beta-lactamase superfamily. Glyoxalase II family. In terms of assembly, monomer. It depends on Zn(2+) as a cofactor.

It catalyses the reaction an S-(2-hydroxyacyl)glutathione + H2O = a 2-hydroxy carboxylate + glutathione + H(+). It functions in the pathway secondary metabolite metabolism; methylglyoxal degradation; (R)-lactate from methylglyoxal: step 2/2. In terms of biological role, thiolesterase that catalyzes the hydrolysis of S-D-lactoyl-glutathione to form glutathione and D-lactic acid. The sequence is that of Hydroxyacylglutathione hydrolase from Yersinia pestis (strain Pestoides F).